A 633-amino-acid chain; its full sequence is Proline-rich protein LAS17 (633 aa).

The 112-residue stretch at 16–127 (LPKASNKIID…KRVQKRERYA (112 aa)) folds into the WH1 domain. 2 disordered regions span residues 145-545 (REEQ…TTGD) and 563-606 (ALRK…PASL). The span at 192–215 (AETFDSDQTSSFSDINSTTASAPT) shows a compositional bias: low complexity. Pro residues-rich tracts occupy residues 216-225 (TPAPALPPAS) and 238-256 (SLPP…PQHN). 2 stretches are compositionally biased toward low complexity: residues 257–269 (SPPQ…QPQS) and 307–322 (PQQN…RNNR). Position 334 is a phosphothreonine (T334). S337 carries the phosphoserine modification. The segment covering 342-357 (PAPPPPPRRGPAPPPP) has biased composition (pro residues). 3 stretches are compositionally biased toward polar residues: residues 363–376 (TSNT…NSLL), 399–414 (NVTM…NSNR), and 454–465 (PQNTQAPSQATN). The segment covering 479-488 (QSQIPQSAPS) has biased composition (low complexity). Residues 547-567 (GRDALLASIRGAGGIGALRKV) enclose the WH2 domain. S588 carries the phosphoserine modification.

In terms of assembly, interacts with KRE6, LSB3, LSB5 and YSC84.

The protein is Proline-rich protein LAS17 (LAS17) of Saccharomyces cerevisiae (strain ATCC 204508 / S288c) (Baker's yeast).